Here is a 461-residue protein sequence, read N- to C-terminus: Regulatory protein AtoC (461 aa).

The region spanning 6-120 (RILIVDDEDN…ELNLIVQRAL (115 aa)) is the Response regulatory domain. At aspartate 55 the chain carries 4-aspartylphosphate. Histidine 73 bears the Phosphohistidine mark. A Sigma-54 factor interaction domain is found at 145–374 (ILTNSPAMMD…LSNVIERAVV (230 aa)). Residues 173–180 (GESGTGKE) and 236–245 (ANEGTLLLDE) contribute to the ATP site. Positions 433-452 (RTRTALMLGISRRALMYKLQ) form a DNA-binding region, H-T-H motif.

Post-translationally, phosphorylated by AtoS. Contains two phosphorylation sites, which are both involved in the transduction of the acetoacetate signal. Asp-55 is probably the primary phosphorylation site, but either both residues can be phosphorylated independently by AtoS or the phosphate group can be transferred between them. In terms of processing, the N-terminus is blocked.

Its subcellular location is the cytoplasm. Its function is as follows. Member of the two-component regulatory system AtoS/AtoC. In the presence of acetoacetate, AtoS/AtoC stimulates the expression of the atoDAEB operon, leading to short chain fatty acid catabolism and activation of the poly-(R)-3-hydroxybutyrate (cPHB) biosynthetic pathway. Also induces the operon in response to spermidine. Involved in the regulation of motility and chemotaxis, via transcriptional induction of the flagellar regulon. AtoC acts by binding directly to the promoter region of the target genes. In addition to its role as a transcriptional regulator, functions as a post-translational regulator that inhibits polyamine biosynthesis via regulation of ornithine decarboxylase (ODC). This Escherichia coli (strain K12) protein is Regulatory protein AtoC (atoC).